A 160-amino-acid chain; its full sequence is NADH-quinone oxidoreductase subunit B (160 aa).

Cys-37, Cys-38, Cys-102, and Cys-132 together coordinate [4Fe-4S] cluster.

The protein belongs to the complex I 20 kDa subunit family. As to quaternary structure, NDH-1 is composed of 14 different subunits. Subunits NuoB, C, D, E, F, and G constitute the peripheral sector of the complex. Requires [4Fe-4S] cluster as cofactor.

The protein localises to the cell inner membrane. It carries out the reaction a quinone + NADH + 5 H(+)(in) = a quinol + NAD(+) + 4 H(+)(out). In terms of biological role, NDH-1 shuttles electrons from NADH, via FMN and iron-sulfur (Fe-S) centers, to quinones in the respiratory chain. Couples the redox reaction to proton translocation (for every two electrons transferred, four hydrogen ions are translocated across the cytoplasmic membrane), and thus conserves the redox energy in a proton gradient. The protein is NADH-quinone oxidoreductase subunit B of Neisseria meningitidis serogroup A / serotype 4A (strain DSM 15465 / Z2491).